The primary structure comprises 314 residues: uncharacterized protein (314 aa).

Residues 1-29 (MMRLIRTLPLRCFKTRIRRQGSLLCLRCF) constitute a mitochondrion transit peptide. A disordered region spans residues 52-74 (SSSPLSKNKEKQEKPEKENEGKH). A compositionally biased stretch (basic and acidic residues) spans 58-74 (KNKEKQEKPEKENEGKH). Residues 177-207 (LNEHHLQLLKLKRELNSIHDELNEIIIDLLQ) are a coiled coil. The helical transmembrane segment at 262–279 (GLLVILVLVCSIMIGVSA) threads the bilayer. Positions 281–314 (KKERPGLQEPEEPEILAPKEDIDTTFPQDQHDID) are disordered.

It is found in the mitochondrion membrane. This is an uncharacterized protein from Saccharomyces cerevisiae (strain ATCC 204508 / S288c) (Baker's yeast).